The chain runs to 190 residues: Putative manganese efflux pump MntP (190 aa).

A run of 6 helical transmembrane segments spans residues 3–23 (MSATLILAFGMSMDAFAASIG), 41–61 (LIFGVIEAITPLIGWALGFFA), 62–82 (SQYILEWDHWVAFTLLLILGG), 105–127 (LALLVCTAIATSLDAMAIGVGLA), 143–163 (ATMIMVTLGMMIGRYIGPILG), and 168–188 (VMGGLVLIGIGCNILYEHLGY).

Belongs to the MntP (TC 9.B.29) family.

The protein localises to the cell inner membrane. Functionally, probably functions as a manganese efflux pump. This Pectobacterium carotovorum subsp. carotovorum (strain PC1) protein is Putative manganese efflux pump MntP.